The primary structure comprises 713 residues: Polyribonucleotide nucleotidyltransferase (713 aa).

Mg(2+) is bound by residues D493 and D499. The 60-residue stretch at 560 to 619 (PRMITIKINPEKIRDVIGKGGSVIRALTEETGTTIDISDDGVVTIASTNSEGMAEAKKRI) folds into the KH domain. The 69-residue stretch at 629–697 (GHVYEGTVLK…EKGRVRLSAK (69 aa)) folds into the S1 motif domain.

This sequence belongs to the polyribonucleotide nucleotidyltransferase family. Mg(2+) is required as a cofactor.

The protein localises to the cytoplasm. It catalyses the reaction RNA(n+1) + phosphate = RNA(n) + a ribonucleoside 5'-diphosphate. In terms of biological role, involved in mRNA degradation. Catalyzes the phosphorolysis of single-stranded polyribonucleotides processively in the 3'- to 5'-direction. The polypeptide is Polyribonucleotide nucleotidyltransferase (Burkholderia mallei (strain NCTC 10247)).